The sequence spans 832 residues: Sodium/hydrogen exchanger 3 (832 aa).

Positions 1–29 (MSGRGGCGPCWGLLLALVLALGALPWTQG) are cleaved as a signal peptide. The Extracellular portion of the chain corresponds to 30-50 (AEQEHHDEIQGFQIVTFKWHH). Residues 51-73 (VQDPYIIALWVLVASLAKIVFHL) traverse the membrane as a helical segment. Topologically, residues 74-81 (SHKVTSVV) are cytoplasmic. A helical transmembrane segment spans residues 82-101 (PESALLIVLGLVLGGIVLAA). The Extracellular segment spans residues 102-110 (DHIASFTLT). A helical membrane pass occupies residues 111 to 128 (PTVFFFYLLPPIVLDAGY). The Cytoplasmic segment spans residues 129-131 (FMP). Residues 132 to 167 (NRLFFSNLGSILLYAVVGTVWNAATTGLSLYGVFLS) form a helical membrane-spanning segment. Positions 140 and 141 each coordinate a 1,2-diacyl-sn-glycero-3-phospho-(1D-myo-inositol). Topologically, residues 168 to 180 (GIMGELKIGLLDF) are extracellular. A helical transmembrane segment spans residues 181–202 (LLFGSLIAAVDPVAVLAVFEEV). Topologically, residues 203-204 (HV) are cytoplasmic. The helical transmembrane segment at 205–236 (NEVLFIIVFGESLLNDAVTVVLYNVFQSFVTL) threads the bilayer. Residues 237 to 243 (GGDKVTG) are Extracellular-facing. Residues 244 to 278 (VDCVKGIVSFFVVSLGGTLVGVVFAFLLSLVTRFT) traverse the membrane as a helical segment. Residues 279–280 (KH) are Cytoplasmic-facing. Residues 281–303 (VRVIEPGFVFIISYLSYLTSEML) traverse the membrane as a helical segment. At 304-305 (SL) the chain is on the extracellular side. The chain crosses the membrane as a helical span at residues 306 to 322 (SSILAITFCGICCQKYV). Residues 323-329 (KANISEQ) are Cytoplasmic-facing. Residues 330 to 358 (SATTVRYTMKMLASGAETIIFMFLGISAV) traverse the membrane as a helical segment. Topologically, residues 359 to 366 (DPLIWTWN) are extracellular. Residues 367-388 (TAFVLLTLLFVSVFRAIGVVLQ) traverse the membrane as a helical segment. The Cytoplasmic portion of the chain corresponds to 389–401 (TWLLNRYRMVQLE). Methionine 397 is a binding site for a 1,2-diacyl-sn-glycero-3-phospho-(1D-myo-inositol). Residues 402–425 (LIDQVVMSYGGLRGAVAFALVALL) traverse the membrane as a helical segment. Residues 426–432 (DGNKVKE) are Extracellular-facing. A helical membrane pass occupies residues 433-466 (KNLFVSTTIIVVFFTVIFQGLTIKPLVQWLKVKR). Topologically, residues 467–832 (SEHREPKLNE…GAEHPESTHM (366 aa)) are cytoplasmic. Glutamine 496, isoleucine 497, and histidine 499 together coordinate a 1,2-diacyl-sn-glycero-3-phospho-(1D-myo-inositol). Phosphoserine is present on residues serine 554 and serine 562. Positions 575–589 (RPSTVEASVSYLLRE) are interaction with EZR. The interaction with NHERF4 stretch occupies residues 590-667 (SASAVCLDMQ…RKRLESFKSA (78 aa)). The interval 591–696 (ASAVCLDMQS…AQKRRNSSVP (106 aa)) is interaction with AHCYL1. Phosphoserine occurs at positions 592 and 607. Phosphoserine; by SGK1 is present on serine 663. The disordered stretch occupies residues 664–706 (FKSAKLGLGQSKKATKHKRERERAQKRRNSSVPNGKLPLDSPA). Positions 676–692 (KATKHKRERERAQKRRN) are enriched in basic residues. Residues serine 719, serine 813, and serine 816 each carry the phosphoserine modification.

Belongs to the monovalent cation:proton antiporter 1 (CPA1) transporter (TC 2.A.36) family. As to quaternary structure, homodimer. Found in the forms of complex and dynamic macromolecular complexes. Interacts with CHP1; this interaction increases trafficking and activity at the plasma membrane of SLC9A3. Interacts with CHP2 and SHANK2. Interacts with NHERF4 and interaction decreases in response to elevated calcium ion levels. Binds NHERF1 and NHERF2. Interacts with PDZK1 (via C-terminal PDZ domain). Interacts with AHCYL1; interaction is required for SLC9A3 activity. Interacts with EZR; interaction targets SLC9A3 to the apical membrane. Interacts with SNX27 (via PDZ domains); directs SLC9A3 membrane insertion from early endosomes to the plasma membrane. In terms of processing, phosphorylated by PKA, which inhibits activity. Phosphorylation at Ser-663 by SGK1 is associated with increased abundance at the cell membrane and activity. Phosphorylation at Ser-719 by CSNK2A1 regulates SLC9A3 activity through the formation of multiple signaling complexes. Intestinal and kidney specific. Most abundant in kidney cortex, followed equally by ileum and ascending colon, then kidney medulla and jejunum. Is absent from duodenum and descending colon.

The protein localises to the apical cell membrane. The protein resides in the cell membrane. Its subcellular location is the recycling endosome membrane. It localises to the early endosome membrane. The enzyme catalyses Na(+)(in) + H(+)(out) = Na(+)(out) + H(+)(in). With respect to regulation, seems to switch between active and inactive modes in response to various stimuli. Activated directly or indirectly by membrane phosphatidylinositol (PIs). Regulated by a variety of auxiliary proteins, which facilitate the maturation, cell surface expression and function of the transporter. Inhibited specifically by the drug tenapanor. Its function is as follows. Plasma membrane Na(+)/H(+) antiporter. Exchanges intracellular H(+) ions for extracellular Na(+) in 1:1 stoichiometry, playing a key role in salt and fluid absorption and pH homeostasis. Major apical Na(+)/H(+) exchanger in kidney and intestine playing an important role in renal and intestine Na(+) absorption and blood pressure regulation. The polypeptide is Sodium/hydrogen exchanger 3 (SLC9A3) (Oryctolagus cuniculus (Rabbit)).